We begin with the raw amino-acid sequence, 147 residues long: Phosphoribosyl-AMP cyclohydrolase (147 aa).

D91 lines the Mg(2+) pocket. Residue C92 participates in Zn(2+) binding. Mg(2+) contacts are provided by D93 and D95. 2 residues coordinate Zn(2+): C109 and C116.

Belongs to the PRA-CH family. In terms of assembly, homodimer. The cofactor is Mg(2+). It depends on Zn(2+) as a cofactor.

Its subcellular location is the cytoplasm. It carries out the reaction 1-(5-phospho-beta-D-ribosyl)-5'-AMP + H2O = 1-(5-phospho-beta-D-ribosyl)-5-[(5-phospho-beta-D-ribosylamino)methylideneamino]imidazole-4-carboxamide. It functions in the pathway amino-acid biosynthesis; L-histidine biosynthesis; L-histidine from 5-phospho-alpha-D-ribose 1-diphosphate: step 3/9. Functionally, catalyzes the hydrolysis of the adenine ring of phosphoribosyl-AMP. The polypeptide is Phosphoribosyl-AMP cyclohydrolase (Rhodopseudomonas palustris (strain BisA53)).